A 363-amino-acid polypeptide reads, in one-letter code: Probable aminomethyltransferase (363 aa).

The protein belongs to the GcvT family. The glycine cleavage system is composed of four proteins: P, T, L and H.

The enzyme catalyses N(6)-[(R)-S(8)-aminomethyldihydrolipoyl]-L-lysyl-[protein] + (6S)-5,6,7,8-tetrahydrofolate = N(6)-[(R)-dihydrolipoyl]-L-lysyl-[protein] + (6R)-5,10-methylene-5,6,7,8-tetrahydrofolate + NH4(+). The glycine cleavage system catalyzes the degradation of glycine. This Haloarcula marismortui (strain ATCC 43049 / DSM 3752 / JCM 8966 / VKM B-1809) (Halobacterium marismortui) protein is Probable aminomethyltransferase.